A 176-amino-acid polypeptide reads, in one-letter code: PPE family protein PPE57 (176 aa).

It belongs to the mycobacterial PPE family. In terms of assembly, interacts with human TLR2.

The protein localises to the secreted. It localises to the cell wall. Its subcellular location is the cell surface. Its function is as follows. Plays a key role in regulating innate and adaptive immune responses through human Toll-like receptor 2 (TLR2). Interacts with TLR2, leading to the subsequent activation of the mitogen-activated protein kinase (MAPK) and nuclear factor kappa B (NF-kappa-B) signaling pathways. Induces macrophage activation by augmenting the expression of several cell surface molecules (CD40, CD80, CD86 and MHC class II) and pro-inflammatory cytokines (TNF-alpha, IL-6 and IL-12p40) within macrophages. Also participates in adaptive immunity by directing Th1-polarised immune responses. Stimulates specific humoral and cellular immune responses in tuberculosis (TB) patients. Induces a strong IgG(1) antibody response and an increased Th1/Th2 type immune response in mice. This is PPE family protein PPE57 from Mycobacterium tuberculosis (strain ATCC 25618 / H37Rv).